A 346-amino-acid polypeptide reads, in one-letter code: Ribonucleoside-diphosphate reductase subunit beta (346 aa).

Fe cation-binding residues include Glu-89, Glu-120, and His-123. The active site involves Tyr-129. Fe cation-binding residues include Glu-193, Glu-227, and His-230.

Belongs to the ribonucleoside diphosphate reductase small chain family. In terms of assembly, tetramer of two alpha and two beta subunits. The cofactor is Fe cation.

It carries out the reaction a 2'-deoxyribonucleoside 5'-diphosphate + [thioredoxin]-disulfide + H2O = a ribonucleoside 5'-diphosphate + [thioredoxin]-dithiol. Provides the precursors necessary for DNA synthesis. Catalyzes the biosynthesis of deoxyribonucleotides from the corresponding ribonucleotides. The chain is Ribonucleoside-diphosphate reductase subunit beta (nrdB) from Chlamydia pneumoniae (Chlamydophila pneumoniae).